The sequence spans 468 residues: Hepatocyte nuclear factor 3-alpha (468 aa).

Positions 169–260 form a DNA-binding region, fork-head; the sequence is AKPPYSYISL…GNMFENGCYL (92 aa). The tract at residues 251 to 288 is essential for DNA binding; sequence GNMFENGCYLRRQKRFKCEKQPGAGGGSGGGGSKGGPE. Residues 269–396 are disordered; the sequence is EKQPGAGGGS…DPHYSFNHPF (128 aa). Gly residues predominate over residues 273 to 285; the sequence is GAGGGSGGGGSKG. Residues serine 303 and serine 327 each carry the phosphoserine modification. Composition is skewed to low complexity over residues 318–328 and 347–365; these read GAPAPGPAASP and SPAS…ALAS.

In terms of assembly, binds DNA as a monomer. Interacts with FOXA2. Interacts with NKX2-1. Interacts with HDAC7. Interacts with the histone H3-H4 heterodimer. Associates with nucleosomes containing histone H2A. Interacts with AR. Interacts with NR0B2. In terms of tissue distribution, restricted mainly to endoderm-derived tissues (lung, liver, stomach, and small intestine). Expressed in the prostate.

Its subcellular location is the nucleus. Its function is as follows. Transcription factor that is involved in embryonic development, establishment of tissue-specific gene expression and regulation of gene expression in differentiated tissues. Is thought to act as a 'pioneer' factor opening the compacted chromatin for other proteins through interactions with nucleosomal core histones and thereby replacing linker histones at target enhancer and/or promoter sites. Binds DNA with the consensus sequence 5'-[AC]A[AT]T[AG]TT[GT][AG][CT]T[CT]-3'. Proposed to play a role in translating the epigenetic signatures into cell type-specific enhancer-driven transcriptional programs. Involved in the development of multiple endoderm-derived organ systems such as the liver, pancreas, lungs and prostate; FOXA1 and FOXA2 seem to have at least in part redundant roles. Plays a role in prostate morphogenesis and epithelial cell differentiation. FOXA1 and FOXA2 are essential for hepatic specification. FOXA1 and FOXA2 are required for morphogenesis and cell differentiation during formation of the lung. FOXA1 and FOXA2 are involved in bile duct formation; they positively regulate the binding of glucocorticoid receptor/NR3C1 to the IL6 promoter. FOXA1 and FOXA2 regulate multiple phases of midbrain dopaminergic neuron development; they regulate expression of NEUROG2 at the beginning of mDA neurogenesis and of NR4A2 and EN1 in immature mDA neurons. Modulates the transcriptional activity of nuclear hormone receptors. Is involved in ESR1-mediated transcription. Inhibits NKX2-1-mediated transcription from the SFTPC promoter in lung epithel independently from DNA-binding. Involved in regulation of apoptosis. Involved in cell cycle regulation. Originally described as a transcription activator for a number of liver genes such as AFP, albumin, tyrosine aminotransferase, PEPCK, etc. Interacts with the cis-acting regulatory regions of these genes. Involved in glucose homeostasis; activates the GCG promoter. This is Hepatocyte nuclear factor 3-alpha (Foxa1) from Mus musculus (Mouse).